A 344-amino-acid chain; its full sequence is L-rhamnose-proton symporter (344 aa).

A run of 10 helical transmembrane segments spans residues 4 to 24 (AITM…CFYA), 38 to 58 (WSVG…ALLL), 68 to 88 (FSLS…IGNI), 101 to 121 (MGIG…TPII), 137 to 157 (TLLG…AGQL), 175 to 195 (LVLA…MNAA), 214 to 234 (LPSY…FCFI), 259 to 279 (VLLS…YAWG), 290 to 310 (ISWM…GLVL), and 323 to 343 (VLSL…IGMA).

Belongs to the L-rhamnose transporter (TC 2.A.7.6) family.

The protein localises to the cell inner membrane. The enzyme catalyses L-rhamnopyranose(in) + H(+)(in) = L-rhamnopyranose(out) + H(+)(out). Functionally, uptake of L-rhamnose across the cytoplasmic membrane with the concomitant transport of protons into the cell (symport system). The protein is L-rhamnose-proton symporter of Shigella sonnei (strain Ss046).